We begin with the raw amino-acid sequence, 147 residues long: MPGVTVKDVNQQEFVRALAAFLKKSGKLKVPDWVDLVKLGRHKELAPSDENWFYIRAASTVRHLYLRGGAGVGSMTKIYGGRQRNGVCPAHYSEGSKNVARKVLQALELLKMIEKDPNGGRRLTAQGTRDLDRIAGQVSAASKKIVQ.

It belongs to the eukaryotic ribosomal protein eS19 family. As to quaternary structure, component of the small ribosomal subunit.

The protein resides in the cytoplasm. The protein localises to the nucleus. Functionally, component of the small ribosomal subunit. The ribosome is a large ribonucleoprotein complex responsible for the synthesis of proteins in the cell. Required for pre-rRNA processing and maturation of 40S ribosomal subunits. This Gillichthys mirabilis (Long-jawed mudsucker) protein is Small ribosomal subunit protein eS19 (rps19).